A 208-amino-acid chain; its full sequence is Large ribosomal subunit protein uL3c (208 aa).

The segment at 129 to 165 (TRGPMTHGSKNHREPGSIGQGSTPGKVHKGKKMAGRL) is disordered.

The protein belongs to the universal ribosomal protein uL3 family. Part of the 50S ribosomal subunit.

The protein resides in the plastid. It is found in the chloroplast. One of the primary rRNA binding proteins, it binds directly near the 3'-end of the 23S rRNA, where it nucleates assembly of the 50S subunit. This chain is Large ribosomal subunit protein uL3c (rpl3), found in Rhodomonas salina (Cryptomonas salina).